We begin with the raw amino-acid sequence, 284 residues long: Diaminopimelate epimerase (284 aa).

Positions 20, 53, and 73 each coordinate substrate. Cys82 acts as the Proton donor in catalysis. Substrate is bound by residues 83–84 (GN), Asn167, Asn200, and 218–219 (ER). Residue Cys227 is the Proton acceptor of the active site. 228–229 (GS) is a substrate binding site.

It belongs to the diaminopimelate epimerase family. In terms of assembly, homodimer.

It localises to the cytoplasm. The enzyme catalyses (2S,6S)-2,6-diaminopimelate = meso-2,6-diaminopimelate. It participates in amino-acid biosynthesis; L-lysine biosynthesis via DAP pathway; DL-2,6-diaminopimelate from LL-2,6-diaminopimelate: step 1/1. In terms of biological role, catalyzes the stereoinversion of LL-2,6-diaminopimelate (L,L-DAP) to meso-diaminopimelate (meso-DAP), a precursor of L-lysine and an essential component of the bacterial peptidoglycan. The chain is Diaminopimelate epimerase from Xanthomonas campestris pv. campestris (strain ATCC 33913 / DSM 3586 / NCPPB 528 / LMG 568 / P 25).